A 586-amino-acid chain; its full sequence is ATP-dependent lipid A-core flippase (586 aa).

Transmembrane regions (helical) follow at residues Ala25–Ile45, Leu74–Phe94, Val163–Cys183, and Val264–Trp284. The 290-residue stretch at Ile28–Lys317 folds into the ABC transmembrane type-1 domain. The 235-residue stretch at Val349–Ser583 folds into the ABC transporter domain. An ATP-binding site is contributed by Gly382–Ser389.

Belongs to the ABC transporter superfamily. Lipid exporter (TC 3.A.1.106) family. In terms of assembly, homodimer.

It localises to the cell inner membrane. It carries out the reaction ATP + H2O + lipid A-core oligosaccharideSide 1 = ADP + phosphate + lipid A-core oligosaccharideSide 2.. Involved in lipopolysaccharide (LPS) biosynthesis. Translocates lipid A-core from the inner to the outer leaflet of the inner membrane. Transmembrane domains (TMD) form a pore in the inner membrane and the ATP-binding domain (NBD) is responsible for energy generation. In Saccharophagus degradans (strain 2-40 / ATCC 43961 / DSM 17024), this protein is ATP-dependent lipid A-core flippase.